A 105-amino-acid chain; its full sequence is Pyrimidine/purine nucleoside phosphorylase (105 aa).

The protein belongs to the nucleoside phosphorylase PpnP family.

The enzyme catalyses a purine D-ribonucleoside + phosphate = a purine nucleobase + alpha-D-ribose 1-phosphate. It carries out the reaction adenosine + phosphate = alpha-D-ribose 1-phosphate + adenine. The catalysed reaction is cytidine + phosphate = cytosine + alpha-D-ribose 1-phosphate. It catalyses the reaction guanosine + phosphate = alpha-D-ribose 1-phosphate + guanine. The enzyme catalyses inosine + phosphate = alpha-D-ribose 1-phosphate + hypoxanthine. It carries out the reaction thymidine + phosphate = 2-deoxy-alpha-D-ribose 1-phosphate + thymine. The catalysed reaction is uridine + phosphate = alpha-D-ribose 1-phosphate + uracil. It catalyses the reaction xanthosine + phosphate = alpha-D-ribose 1-phosphate + xanthine. Its function is as follows. Catalyzes the phosphorolysis of diverse nucleosides, yielding D-ribose 1-phosphate and the respective free bases. Can use uridine, adenosine, guanosine, cytidine, thymidine, inosine and xanthosine as substrates. Also catalyzes the reverse reactions. The protein is Pyrimidine/purine nucleoside phosphorylase of Acidovorax ebreus (strain TPSY) (Diaphorobacter sp. (strain TPSY)).